The sequence spans 313 residues: 4-diphosphocytidyl-2-C-methyl-D-erythritol kinase (313 aa).

Residue Lys29 is part of the active site. Pro113 to Ser123 provides a ligand contact to ATP. The active site involves Asp155.

Belongs to the GHMP kinase family. IspE subfamily.

The catalysed reaction is 4-CDP-2-C-methyl-D-erythritol + ATP = 4-CDP-2-C-methyl-D-erythritol 2-phosphate + ADP + H(+). It functions in the pathway isoprenoid biosynthesis; isopentenyl diphosphate biosynthesis via DXP pathway; isopentenyl diphosphate from 1-deoxy-D-xylulose 5-phosphate: step 3/6. Functionally, catalyzes the phosphorylation of the position 2 hydroxy group of 4-diphosphocytidyl-2C-methyl-D-erythritol. The sequence is that of 4-diphosphocytidyl-2-C-methyl-D-erythritol kinase from Haemophilus influenzae (strain 86-028NP).